The following is a 564-amino-acid chain: 4-hydroxybutyrate--CoA ligase 1 (564 aa).

A helical transmembrane segment spans residues 105–125 (VHPMHWAVFLAVIKGGFVMVP). ATP is bound by residues 204–212 (TSGTTGMPK), 343–348 (DFYGQT), Asp-429, and Arg-444. Residue Thr-348 participates in substrate binding. Position 452–454 (452–454 (SDY)) interacts with CoA. Substrate is bound at residue Arg-455. Residues Arg-484, Lys-513, and 521–523 (VPR) each bind CoA. ATP is bound at residue Lys-538.

The protein belongs to the ATP-dependent AMP-binding enzyme family. Mg(2+) is required as a cofactor. It depends on Mn(2+) as a cofactor.

Its subcellular location is the membrane. The catalysed reaction is 4-hydroxybutanoate + ATP + CoA = 4-hydroxybutanoyl-CoA + AMP + diphosphate. It catalyses the reaction acetate + ATP + CoA = acetyl-CoA + AMP + diphosphate. It carries out the reaction propanoate + ATP + CoA = propanoyl-CoA + AMP + diphosphate. The enzyme catalyses a medium-chain fatty acid + ATP + CoA = a medium-chain fatty acyl-CoA + AMP + diphosphate. Involved in the 3-hydroxypropionate/4-hydroxybutyrate cycle which incorporates carbon dioxide into cellular carbon. Catalyzes the ligation of coenzyme A (CoA) to 4-hydroxybutyrate (4HB). It can also use butyrate, valerate, propionate, acetate and 3-hydroxybutyrate (3HB) as substrates. This is 4-hydroxybutyrate--CoA ligase 1 from Metallosphaera sedula (strain ATCC 51363 / DSM 5348 / JCM 9185 / NBRC 15509 / TH2).